The chain runs to 215 residues: Large ribosomal subunit protein uL3 (215 aa).

Position 153 is an N5-methylglutamine (Gln153).

This sequence belongs to the universal ribosomal protein uL3 family. Part of the 50S ribosomal subunit. Forms a cluster with proteins L14 and L19. Methylated by PrmB.

Its function is as follows. One of the primary rRNA binding proteins, it binds directly near the 3'-end of the 23S rRNA, where it nucleates assembly of the 50S subunit. This chain is Large ribosomal subunit protein uL3, found in Nitrosococcus oceani (strain ATCC 19707 / BCRC 17464 / JCM 30415 / NCIMB 11848 / C-107).